A 462-amino-acid polypeptide reads, in one-letter code: Gamma-glutamylethanolamide synthetase GlnA4 (462 aa).

The GS beta-grasp domain occupies 30 to 126 (GDIDTVVLAF…AVADLAWEDG (97 aa)). One can recognise a GS catalytic domain in the interval 133 to 462 (PRQILRRQLE…WELRRSFERM (330 aa)). Mg(2+)-binding residues include Glu156 and Glu158. An ATP-binding site is contributed by Glu214. Residues Glu219 and Glu226 each coordinate Mg(2+). Position 270 (Gly270) interacts with L-glutamate. A Mg(2+)-binding site is contributed by His274. 276-278 (HLS) serves as a coordination point for ATP. Residues Arg325 and Arg343 each coordinate L-glutamate. Residues Arg343 and Arg348 each contribute to the ATP site. Glu359 is a binding site for Mg(2+). L-glutamate is bound at residue Arg361.

Belongs to the glutamine synthetase family. Mg(2+) serves as cofactor.

It catalyses the reaction ethanolamine + L-glutamate + ATP = gamma-L-glutamylethanolamide + ADP + phosphate + H(+). It functions in the pathway amine and polyamine degradation; ethanolamine degradation. With respect to regulation, very slightly decreased activity with glutamine synthetase (GS) inhibitor methionine sulfoximine (MSO). In terms of biological role, involved in the catabolism of monoamine ethanolamine. Catalyzes the ATP-dependent gamma-glutamylation of ethanolamine. No activity with polyamines. No complementation of the L-glutamine auxotrophy of an E.coli glnA mutant. Enables survival of S.coelicolor under high local environmental ethanolamine conditions. May play a role during starvation conditions to limit intracellular ethanolamine concentration, which in excess is toxic to the cells. The protein is Gamma-glutamylethanolamide synthetase GlnA4 of Streptomyces coelicolor (strain ATCC BAA-471 / A3(2) / M145).